The following is a 129-amino-acid chain: RxLR effector protein PexRD43 (129 aa).

An N-terminal signal peptide occupies residues 1-16 (MRLAMILLSIPLFVSG). The RxLR-dEER motif lies at 44-56 (RSLRTSGEANEER).

Belongs to the RxLR effector family.

It localises to the secreted. The protein resides in the host cytoplasm. It is found in the host nucleus. In terms of biological role, effector that enhances P.infestans colonization of Nicotiana benthamiana leaves. In Phytophthora infestans (strain T30-4) (Potato late blight agent), this protein is RxLR effector protein PexRD43.